The following is a 223-amino-acid chain: Triosephosphate isomerase (223 aa).

6–8 (NLK) lines the substrate pocket. The Electrophile role is filled by His86. Glu151 acts as the Proton acceptor in catalysis. 2 residues coordinate substrate: Gly157 and Ser187.

It belongs to the triosephosphate isomerase family. Homodimer.

It localises to the cytoplasm. The catalysed reaction is D-glyceraldehyde 3-phosphate = dihydroxyacetone phosphate. Its pathway is carbohydrate biosynthesis; gluconeogenesis. It functions in the pathway carbohydrate degradation; glycolysis; D-glyceraldehyde 3-phosphate from glycerone phosphate: step 1/1. Functionally, involved in the gluconeogenesis. Catalyzes stereospecifically the conversion of dihydroxyacetone phosphate (DHAP) to D-glyceraldehyde-3-phosphate (G3P). This chain is Triosephosphate isomerase, found in Campylobacter jejuni subsp. doylei (strain ATCC BAA-1458 / RM4099 / 269.97).